A 515-amino-acid chain; its full sequence is Tripartite motif-containing protein 5 (515 aa).

Ala2 carries the N-acetylalanine modification. The segment at Cys15–Arg60 adopts an RING-type zinc-finger fold. Ser87 is modified (phosphoserine). The B box-type zinc finger occupies Gln92–Met133. 4 residues coordinate Zn(2+): Cys97, His100, Cys119, and His125. Residues Ala137–Gln225 are a coiled coil. Residues Phe187–Asn200 are required for interaction with GABARAP and for autophagy. Positions Leu283–Ser515 constitute a B30.2/SPRY domain.

This sequence belongs to the TRIM/RBCC family. As to quaternary structure, can form homodimers and homotrimers. In addition to lower-order dimerization, also exhibits a higher-order multimerization and both low- and high-order multimerizations are essential for its restriction activity. Interacts with BTBD1 and BTBD2. Interacts with PSMC4, PSMC5, PSMD7 and HSPA8/HSC70. Interacts (via B30.2/SPRY domain) with HSPA1A/B. Interacts with PSMC2, MAP3K7/TAK1, TAB2 and TAB3. Interacts with SQSTM1. Interacts with TRIM6 and TRIM34. Interacts with ULK1 (phosphorylated form), GABARAP, GABARAPL1, GABARAPL2, MAP1LC3A, MAP1LC3C and BECN1. Post-translationally, degraded in a proteasome-independent fashion in the absence of viral infection but in a proteasome-dependent fashion following exposure to restriction sensitive virus. Autoubiquitinated in a RING finger- and UBE2D2-dependent manner. Monoubiquitinated by TRIM21. Deubiquitinated by Yersinia YopJ. Ubiquitination may not lead to proteasomal degradation.

Its subcellular location is the cytoplasm. The protein localises to the nucleus. It catalyses the reaction S-ubiquitinyl-[E2 ubiquitin-conjugating enzyme]-L-cysteine + [acceptor protein]-L-lysine = [E2 ubiquitin-conjugating enzyme]-L-cysteine + N(6)-ubiquitinyl-[acceptor protein]-L-lysine.. It functions in the pathway protein modification; protein ubiquitination. Capsid-specific restriction factor that prevents infection from non-host-adapted retroviruses. Blocks viral replication early in the life cycle, after viral entry but before reverse transcription. In addition to acting as a capsid-specific restriction factor, also acts as a pattern recognition receptor that activates innate immune signaling in response to the retroviral capsid lattice. Binding to the viral capsid triggers its E3 ubiquitin ligase activity, and in concert with the heterodimeric ubiquitin conjugating enzyme complex UBE2V1-UBE2N (also known as UBC13-UEV1A complex) generates 'Lys-63'-linked polyubiquitin chains, which in turn are catalysts in the autophosphorylation of the MAP3K7/TAK1 complex (includes TAK1, TAB2, and TAB3). Activation of the MAP3K7/TAK1 complex by autophosphorylation results in the induction and expression of NF-kappa-B and MAPK-responsive inflammatory genes, thereby leading to an innate immune response in the infected cell. Restricts infection by human immunodeficiency virus type 1 (HIV-1) and N-tropic murine leukemia virus (N-MLV). Plays a role in regulating autophagy through activation of autophagy regulator BECN1 by causing its dissociation from its inhibitors BCL2 and TAB2. This Chlorocebus pygerythrus (Vervet monkey) protein is Tripartite motif-containing protein 5 (TRIM5).